We begin with the raw amino-acid sequence, 769 residues long: Protein transport protein sec39 (769 aa).

The protein belongs to the SEC39 family. As to quaternary structure, component of a peripheral membrane protein complex consisting of dsl1, sec39 and tip20.

It localises to the endoplasmic reticulum membrane. Required for protein transport between the Golgi and the endoplasmic reticulum. May contribute to tethering of coatomer-coated retrograde transport vesicles to the ER membrane through interaction with and stabilization of the SNARE complex. The polypeptide is Protein transport protein sec39 (Schizosaccharomyces pombe (strain 972 / ATCC 24843) (Fission yeast)).